A 260-amino-acid chain; its full sequence is Mantle protein (260 aa).

The first 16 residues, 1 to 16 (MLAVLLFAALVATAYS), serve as a signal peptide directing secretion.

As to expression, prismatic layer of shell (at protein level). Expressed primarily in the mantle with highest level in the mantle edge and lower level in the mantle pallium.

The protein localises to the secreted. This chain is Mantle protein, found in Pinctada maxima (Silver-lipped pearl oyster).